The primary structure comprises 465 residues: Crh-like protein ARB_05253 (465 aa).

Positions 1-21 are cleaved as a signal peptide; the sequence is MKLSLAAALLGALAVSAQTST. Residues 22 to 223 enclose the GH16 domain; that stretch reads ECNPLKQKCP…WAGGETDFSK (202 aa). Cysteine 23 and cysteine 30 are joined by a disulfide. Catalysis depends on glutamate 114, which acts as the Nucleophile. The active-site Proton donor is the glutamate 118. The chitin site is built by glutamate 118, tryptophan 200, and threonine 211. 2 disordered regions span residues 261–325 and 339–442; these read GQVN…STMT and TGTG…PGST. Asparagine 264 carries N-linked (GlcNAc...) asparagine glycosylation. Residues 277-287 show a composition bias toward low complexity; it reads SSTLPSSPSTS. Over residues 304-325 the composition is skewed to polar residues; it reads QAPNTGSSPSNTLTNGPSSTMT. Low complexity-rich tracts occupy residues 339 to 348, 361 to 376, and 383 to 397; these read TGTGGVVTPT, TSRSSRSVSSSVSASS, and MTTSTGSGSAPTGTG. Serine 441 carries GPI-anchor amidated serine lipidation. The propeptide at 442–465 is removed in mature form; it reads TGAIHSVSNALLLSFCAIAAWALV.

This sequence belongs to the glycosyl hydrolase 16 family. CRH1 subfamily. Post-translationally, the GPI-anchor is attached to the protein in the endoplasmic reticulum and serves to target the protein to the cell surface. There, the glucosamine-inositol phospholipid moiety is cleaved off and the GPI-modified mannoprotein is covalently attached via its lipidless GPI glycan remnant to the 1,6-beta-glucan of the outer cell wall layer.

It is found in the secreted. Its subcellular location is the cell wall. The protein localises to the membrane. It carries out the reaction Random endo-hydrolysis of N-acetyl-beta-D-glucosaminide (1-&gt;4)-beta-linkages in chitin and chitodextrins.. In terms of biological role, dual chitinase/transglycosylase that plays a role in cell wall architecture. Chitinase and transglycosylase activities are coupled. Required for the polysaccharide cross-linking at the septa and the cell wall. More specifically, transfers chitin to 1,6-beta-glucan in the cell wall. This Arthroderma benhamiae (strain ATCC MYA-4681 / CBS 112371) (Trichophyton mentagrophytes) protein is Crh-like protein ARB_05253.